Consider the following 266-residue polypeptide: Small ribosomal subunit protein uS3m (266 aa).

Belongs to the universal ribosomal protein uS3 family.

The protein resides in the mitochondrion. This Mycosarcoma maydis (Corn smut fungus) protein is Small ribosomal subunit protein uS3m (MRPS3).